The following is a 528-amino-acid chain: Succinate-semialdehyde dehydrogenase, mitochondrial (528 aa).

The N-terminal 34 residues, 1-34 (MVIGAAARVAIGGCRKLISSHTSLLLVSSQCRQM), are a transit peptide targeting the mitochondrion. An NAD(+)-binding site is contributed by 196 to 198 (TPW). R207 contributes to the substrate binding site. NAD(+)-binding positions include 222 to 225 (KPSE), 275 to 280 (GSTAVG), and E297. E297 acts as the Proton acceptor in catalysis. R325 is a binding site for substrate. The active-site Nucleophile is C331. A disulfide bridge links C331 with C333. Residue 428-430 (EIF) participates in NAD(+) binding. Substrate is bound at residue S488.

It belongs to the aldehyde dehydrogenase family. Homotetramer. In terms of tissue distribution, expressed in developing leaf tissues.

It is found in the mitochondrion matrix. It catalyses the reaction succinate semialdehyde + NAD(+) + H2O = succinate + NADH + 2 H(+). It functions in the pathway amino-acid degradation; 4-aminobutanoate degradation. With respect to regulation, competitive inhibition by NADH. Inhibited by ATP, ADP and AMP. Redox-regulated. Inhibited under oxydizing conditions. Its function is as follows. Oxidizes specifically succinate semialdehyde. Involved in plant response to environmental stress by preventing the accumulation of reactive oxygen species, probably by regulating proline, gamma-hydroxybutyrate (GHB) and gamma-aminobutyrate (GABA) levels. Required for the maintenance of the shoot apical meristem (SAM) structure and subsequent adaxial-abaxial axis-dependent development of cotyledons and leaves. The sequence is that of Succinate-semialdehyde dehydrogenase, mitochondrial from Arabidopsis thaliana (Mouse-ear cress).